The sequence spans 405 residues: MAVGLGPLPTLHPVPGFELGIASAGIKRPGRKDVVVMRCAEGSSVAGVFTLNAFCAAPVILSKQRVQGTVRYLLTNTGNANAGTGAPGLAAAERTCAKLAELAGVPAESVLPFSTGVIGEPLPVEKIEGALQAALDNLSENNWAEAATGIMTTDTLPKGASRQFQHDGVTVTVTGISKGAGMIRPNMATMLGYIATDAKVAPKVLKDLMLDGANKSFNRITIDGDTSTNDCCMLIATGKADLPEVTEASGALFEALKKAVFEVCMEVAQAIVRDGEGATKFVTVQVNGGGNHQECLDVGYAVAHSPLIKTALFASDPNWGRILAAVGRAGVPELDVSLIDVYLDSVCIASKGGRSPSYTEAQGSAVMAQEEITIRIELGRGQCSETIWTTDLSHEYVKINAEYRT.

6 residues coordinate substrate: Thr152, Lys178, Thr189, Glu276, Asn400, and Thr405. Catalysis depends on Thr189, which acts as the Nucleophile.

The protein belongs to the ArgJ family. In terms of assembly, heterotetramer of two alpha and two beta chains.

It is found in the cytoplasm. The enzyme catalyses N(2)-acetyl-L-ornithine + L-glutamate = N-acetyl-L-glutamate + L-ornithine. The catalysed reaction is L-glutamate + acetyl-CoA = N-acetyl-L-glutamate + CoA + H(+). The protein operates within amino-acid biosynthesis; L-arginine biosynthesis; L-ornithine and N-acetyl-L-glutamate from L-glutamate and N(2)-acetyl-L-ornithine (cyclic): step 1/1. Its pathway is amino-acid biosynthesis; L-arginine biosynthesis; N(2)-acetyl-L-ornithine from L-glutamate: step 1/4. Functionally, catalyzes two activities which are involved in the cyclic version of arginine biosynthesis: the synthesis of N-acetylglutamate from glutamate and acetyl-CoA as the acetyl donor, and of ornithine by transacetylation between N(2)-acetylornithine and glutamate. The protein is Arginine biosynthesis bifunctional protein ArgJ of Pseudomonas putida (strain ATCC 47054 / DSM 6125 / CFBP 8728 / NCIMB 11950 / KT2440).